A 177-amino-acid polypeptide reads, in one-letter code: Nucleoside triphosphate/diphosphate phosphatase (177 aa).

Catalysis depends on arginine 23, which acts as the Proton donor. 6 residues coordinate Mg(2+): asparagine 87, aspartate 103, aspartate 105, aspartate 107, aspartate 120, and glutamate 123.

Belongs to the Ntdp family. Mg(2+) is required as a cofactor.

The catalysed reaction is a ribonucleoside 5'-triphosphate + H2O = a ribonucleoside 5'-diphosphate + phosphate + H(+). The enzyme catalyses a ribonucleoside 5'-diphosphate + H2O = a ribonucleoside 5'-phosphate + phosphate + H(+). In terms of biological role, has nucleoside phosphatase activity towards nucleoside triphosphates and nucleoside diphosphates. This Streptococcus pyogenes serotype M1 protein is Nucleoside triphosphate/diphosphate phosphatase.